The following is a 191-amino-acid chain: C-type lectin domain family 2 member D (191 aa).

At 1 to 38 (MHDSNNVEKDITPSELPANPGCLHSKEHSIKATLIWRL) the chain is on the cytoplasmic side. Residues 39–59 (FFLIMFLTIIVCGMVAALSAI) form a helical; Signal-anchor for type II membrane protein membrane-spanning segment. The Extracellular segment spans residues 60-191 (RANCHQEPSV…WICSKSDIHV (132 aa)). Cys75 and Cys86 form a disulfide bridge. One can recognise a C-type lectin domain in the interval 82 to 185 (FQRKCFYFSD…HYTERKWICS (104 aa)). N-linked (GlcNAc...) asparagine glycosylation is found at Asn95 and Asn147. Cys103 and Cys184 are joined by a disulfide.

Homodimer; disulfide-linked. N-glycosylated. As to expression, detected in peripheral blood leukocytes, osteoblasts, lymph node, thymus and spleen. Isoform 1, isoform 2 and isoform 4 are expressed in T- and B-lymphocytes, and at lower levels in NK cells. They are also expressed in B-cell lines and LPS-matured monocyte-derived dendritic cells.

The protein localises to the cell membrane. The protein resides in the endoplasmic reticulum. In terms of biological role, receptor for KLRB1 that protects target cells against natural killer cell-mediated lysis. Inhibits osteoclast formation. Inhibits bone resorption. Modulates the release of interferon-gamma. Binds high molecular weight sulfated glycosaminoglycans. The protein is C-type lectin domain family 2 member D (CLEC2D) of Homo sapiens (Human).